The chain runs to 435 residues: Adenylosuccinate synthetase (435 aa).

Residues 17-23 and 45-47 each bind GTP; these read GDEGKGK and GHT. Asp18 acts as the Proton acceptor in catalysis. Residues Asp18 and Gly45 each coordinate Mg(2+). Residues 18 to 21, 43 to 46, Thr135, Arg149, Gln230, Thr245, and Arg309 contribute to the IMP site; these read DEGK and NAGH. Catalysis depends on His46, which acts as the Proton donor. 305–311 contacts substrate; sequence TVSGRAR. Residues Arg311, 337 to 339, and 419 to 421 each bind GTP; these read LLD and SVG.

This sequence belongs to the adenylosuccinate synthetase family. As to quaternary structure, homodimer. It depends on Mg(2+) as a cofactor.

It localises to the cytoplasm. The catalysed reaction is IMP + L-aspartate + GTP = N(6)-(1,2-dicarboxyethyl)-AMP + GDP + phosphate + 2 H(+). Its pathway is purine metabolism; AMP biosynthesis via de novo pathway; AMP from IMP: step 1/2. In terms of biological role, plays an important role in the de novo pathway of purine nucleotide biosynthesis. Catalyzes the first committed step in the biosynthesis of AMP from IMP. In Spiroplasma citri, this protein is Adenylosuccinate synthetase.